A 203-amino-acid chain; its full sequence is GTP-binding protein yptV1 (203 aa).

Residues 15–23 (GDSGVGKSC), 33–40 (YTESYIST), 63–67 (DTAGQ), 121–124 (NKSD), and 151–153 (SAK) each bind GTP. Positions 37 to 45 (YISTIGVDF) match the Effector region motif. A disordered region spans residues 173–203 (MASQPVPPKPGGPVVRPTEGKPINNKSSSCC). 2 S-geranylgeranyl cysteine lipidation sites follow: C202 and C203.

It belongs to the small GTPase superfamily. Rab family.

The protein resides in the cell membrane. Its function is as follows. Protein transport. Probably involved in vesicular traffic. The polypeptide is GTP-binding protein yptV1 (YPTV1) (Volvox carteri (Green alga)).